The sequence spans 292 residues: Phosphatidylglycerol--prolipoprotein diacylglyceryl transferase (292 aa).

Helical transmembrane passes span 21-41, 60-80, 98-118, 124-144, 198-218, 225-245, and 258-278; these read VSLH…MWLA, LLYA…VLFY, GGMS…VFAH, FFQV…AGRL, SQLY…NLFI, GAVS…VEFF, and ISMG…MMIW. Residue Arg143 participates in a 1,2-diacyl-sn-glycero-3-phospho-(1'-sn-glycerol) binding.

Belongs to the Lgt family.

It localises to the cell inner membrane. The catalysed reaction is L-cysteinyl-[prolipoprotein] + a 1,2-diacyl-sn-glycero-3-phospho-(1'-sn-glycerol) = an S-1,2-diacyl-sn-glyceryl-L-cysteinyl-[prolipoprotein] + sn-glycerol 1-phosphate + H(+). It participates in protein modification; lipoprotein biosynthesis (diacylglyceryl transfer). In terms of biological role, catalyzes the transfer of the diacylglyceryl group from phosphatidylglycerol to the sulfhydryl group of the N-terminal cysteine of a prolipoprotein, the first step in the formation of mature lipoproteins. The chain is Phosphatidylglycerol--prolipoprotein diacylglyceryl transferase from Erwinia tasmaniensis (strain DSM 17950 / CFBP 7177 / CIP 109463 / NCPPB 4357 / Et1/99).